The sequence spans 518 residues: Cytochrome P450 736A117 (518 aa).

N-linked (GlcNAc...) asparagine glycosylation is present at asparagine 12. Residues 17–37 (FLQPLAFTLLAIFLVLLYTWY) traverse the membrane as a helical segment. Residues asparagine 185, asparagine 275, and asparagine 356 are each glycosylated (N-linked (GlcNAc...) asparagine). Residue cysteine 460 coordinates heme.

Belongs to the cytochrome P450 family. It depends on heme as a cofactor. Expressed at similar levels in fruit kernel, seedlings, leaves, stems and buds.

The protein localises to the membrane. The chain is Cytochrome P450 736A117 from Prunus mume (Japanese apricot).